The sequence spans 487 residues: L-tartrate/succinate antiporter (487 aa).

The next 14 helical transmembrane spans lie at 10–30 (YLAPLAVIAIIALIPVPAGLE), 33–53 (TWLYFAVFTGVIVGLILEPVP), 54–74 (GAVVAMVGISIIAILSPWLLF), 93–113 (WAVSGFSNSVIWLIFAAFMFG), 137–157 (TLFLGYAVMFSELILAPVTPS), 189–209 (IGSYIMWIGIVADCVTSAIFL), 230–250 (LSWGDWFLGMLPLSILLVLLV), 292–312 (LMVGALVLWIFGGDYIDAAMV), 313–333 (GYSVVALMLLLRIISWDDIVS), 340–360 (VFFWLASLITLATGLNNTGFI), 370–390 (SLSGYSPTMVMVALIVVFYLL), 393–413 (FFASATAYTSALAPMMIAAAL), 418–438 (IPLPVFCLMVGAAIGLGSILT), and 465–485 (IFGLIFLVLLVITGLLWMPVV).

This sequence belongs to the SLC13A/DASS transporter (TC 2.A.47) family. DIT1 subfamily.

It is found in the cell inner membrane. It catalyses the reaction (2R,3R)-tartrate(out) + succinate(in) = (2R,3R)-tartrate(in) + succinate(out). Its function is as follows. Catalyzes the uptake of tartrate in exchange for intracellular succinate. Essential for anaerobic L-tartrate fermentation. This chain is L-tartrate/succinate antiporter (ttdT), found in Shigella dysenteriae serotype 1 (strain Sd197).